A 244-amino-acid chain; its full sequence is 7-cyano-7-deazaguanine synthase (244 aa).

Residue 14-24 (FSGGQDSATCV) coordinates ATP. C202, C217, C220, and C223 together coordinate Zn(2+).

Belongs to the QueC family. Zn(2+) is required as a cofactor.

It catalyses the reaction 7-carboxy-7-deazaguanine + NH4(+) + ATP = 7-cyano-7-deazaguanine + ADP + phosphate + H2O + H(+). It functions in the pathway purine metabolism; 7-cyano-7-deazaguanine biosynthesis. In terms of biological role, catalyzes the ATP-dependent conversion of 7-carboxy-7-deazaguanine (CDG) to 7-cyano-7-deazaguanine (preQ(0)). This is 7-cyano-7-deazaguanine synthase from Burkholderia ambifaria (strain MC40-6).